Here is a 307-residue protein sequence, read N- to C-terminus: Dioxygenase swnH1 (307 aa).

Positions 149, 151, and 227 each coordinate Fe cation.

This sequence belongs to the PhyH family. Homodimer. Fe cation is required as a cofactor.

It functions in the pathway mycotoxin biosynthesis. In terms of biological role, dioxygenase; part of the gene cluster that mediates the biosynthesis of swainsonine (SW), a cytotoxic fungal alkaloid and a potential cancer therapy drug. Swainsonine production occurs via a multibranched pathway and is dispensable for fungal colonization of plants and infection of insect hosts. The first step of swainsonine biosynthesis is the production of the precursor pipecolic acid (PA) via conversion of L-lysine (Lys) to 1-piperideine-6-carboxylate (P6C) by the aminotransferase swnA, the latter being further reduced to PA by the reductase swnR. The PKS-NRPS hybrid synthetase swnK uptakes and condensates PA and malonyl-CoA with and without skipping of the ketoreductase (KR) domain in order to produce 3 intermediates, 1-oxoindolizidine, (1S)-1-hydroxyindolizin, and (1R)-1-hydroxyindolizine; with the transisomer (1S)-1-hydroxyindolizin being predominant. The terminal thioester reductase (TE) domain of swnK is involved in reduction of the thioester bond to release the intermediate aldehydes. The oxidoreductase swnN could contribute to the reduction of 1-oxoindolizidine to (1S)-1-hydroxyindolizin and (1R)-1-hydroxyindolizine, contributing to the major route of SW production. The dioxygenase swnH2 would be responsible for the oxidization of (1R)-1-hydroxyindolizine into (1R,2S)-1,2-dihydroxyindolizine and of (1S)-1-hydroxyindolizin to yield both (1R,2S)-1,2-dihydroxyindolizine and (1S,2S)-1,2-dihydroxyindolizine. The dioxygenase swnH1 then performs the conversion of the 1,2-dihydroxyindolizine epimers to SW. This Arthroderma benhamiae (strain ATCC MYA-4681 / CBS 112371) (Trichophyton mentagrophytes) protein is Dioxygenase swnH1.